Reading from the N-terminus, the 440-residue chain is MSRPKPIHNAQPEQVFIESLDTEGRGIARVEGKVLFVDGALPGERVWARRTQNHKSFDRAELLQVDKASSLRVSPPCPHFGVCGGCSLQHLEPAAQVAIKQRQLEDHLWRIGKVRPERVLPPIHGPSLGYRSKARLSVRTPKTRGAMVGFRERNSSYVVDMGQCLTLDPRVGQRILSLRTLIGQMQSPQDFPQIEVAATPDAVALVFRHMRPLAESDLQHLRAFGEQHDLQIWLQPRGPETLYPLWPEQPEPLHYDLPDYRLRLRFDPLVFTQVNQAANQVMVRRAMALLQPQPGEHILDLFCGLGNFTLPIARLGAQVLGIEGDARLVALAAENAAANGLADKARYAVADLTQARMEDFAPAGAIDKMLIDPPRSGAIEVLRSLTPGVRRLVYVSCNPATLARDAEYLVHERGYRLRAAGVVNMFPHTAHVESIALFER.

The TRAM domain maps to 6-64 (PIHNAQPEQVFIESLDTEGRGIARVEGKVLFVDGALPGERVWARRTQNHKSFDRAELLQ). [4Fe-4S] cluster contacts are provided by C77, C83, C86, and C164. 6 residues coordinate S-adenosyl-L-methionine: Q273, F302, N307, E323, D351, and D372. Catalysis depends on C397, which acts as the Nucleophile.

Belongs to the class I-like SAM-binding methyltransferase superfamily. RNA M5U methyltransferase family. RlmD subfamily.

It catalyses the reaction uridine(1939) in 23S rRNA + S-adenosyl-L-methionine = 5-methyluridine(1939) in 23S rRNA + S-adenosyl-L-homocysteine + H(+). Functionally, catalyzes the formation of 5-methyl-uridine at position 1939 (m5U1939) in 23S rRNA. This Acidithiobacillus ferrooxidans (strain ATCC 23270 / DSM 14882 / CIP 104768 / NCIMB 8455) (Ferrobacillus ferrooxidans (strain ATCC 23270)) protein is 23S rRNA (uracil(1939)-C(5))-methyltransferase RlmD.